We begin with the raw amino-acid sequence, 869 residues long: Leucine--tRNA ligase (869 aa).

The 'HIGH' region signature appears at Pro-42–His-52. Positions Thr-624–Ser-628 match the 'KMSKS' region motif. Lys-627 is a binding site for ATP.

The protein belongs to the class-I aminoacyl-tRNA synthetase family.

It is found in the cytoplasm. The catalysed reaction is tRNA(Leu) + L-leucine + ATP = L-leucyl-tRNA(Leu) + AMP + diphosphate. This Nitrosomonas europaea (strain ATCC 19718 / CIP 103999 / KCTC 2705 / NBRC 14298) protein is Leucine--tRNA ligase.